We begin with the raw amino-acid sequence, 295 residues long: Protease HtpX (295 aa).

Transmembrane regions (helical) follow at residues 4-24 (ILLFVATNLAVVLVASITLSL) and 41-61 (SSLLVFCAVFGFAGSLVSLFI). A Zn(2+)-binding site is contributed by His-147. Glu-148 is a catalytic residue. His-151 lines the Zn(2+) pocket. The next 2 helical transmembrane spans lie at 158–178 (VTLALVQGVVNTFVMFFARII) and 199–219 (VATIVAELILGILASMIVMWF). Position 224 (Glu-224) interacts with Zn(2+).

It belongs to the peptidase M48B family. It depends on Zn(2+) as a cofactor.

The protein localises to the cell inner membrane. This is Protease HtpX from Pseudomonas putida (strain GB-1).